A 166-amino-acid polypeptide reads, in one-letter code: Small ribosomal subunit protein uS5 (166 aa).

The S5 DRBM domain occupies 11-74; that stretch reads LNEKLIAVNR…EKARRNMFTI (64 aa).

The protein belongs to the universal ribosomal protein uS5 family. As to quaternary structure, part of the 30S ribosomal subunit. Contacts proteins S4 and S8.

With S4 and S12 plays an important role in translational accuracy. Its function is as follows. Located at the back of the 30S subunit body where it stabilizes the conformation of the head with respect to the body. The chain is Small ribosomal subunit protein uS5 from Aliivibrio salmonicida (strain LFI1238) (Vibrio salmonicida (strain LFI1238)).